The primary structure comprises 102 residues: Large ribosomal subunit protein bL21 (102 aa).

The protein belongs to the bacterial ribosomal protein bL21 family. Part of the 50S ribosomal subunit. Contacts protein L20.

Its function is as follows. This protein binds to 23S rRNA in the presence of protein L20. In Nitratiruptor sp. (strain SB155-2), this protein is Large ribosomal subunit protein bL21.